The chain runs to 306 residues: MQNQIDMVKDEAEVAASISAIKGEEWGNCSSVEDQPSFQEEEAAKVPYVGDKEPLSSLAAEYQSGSPILLEKIKILDSQYIGIRRTRGDGNCFFRSFMFSYLEHILESQDRAEVDRIKVNVEKCRKTLQNLGYTDFTFEDFFALFLEQLDDILQGTEESISYDELVNRSRDQSVSDYIVMFFRFVTAGDIRTRADFFEPFITGLSNATVDQFCKSSVEPMGEESDHIHITALSDALGVAIRVVYLDRSSCDSGGVTVNHHDFVPVGITNEKDEEASAPFITLLYRPGHYDILYPKPSCKVSDNVGK.

Residues 81-295 (IGIRRTRGDG…PGHYDILYPK (215 aa)) enclose the OTU domain. D89 is a catalytic residue. The Nucleophile role is filled by C92. Catalysis depends on residues H259 and H288.

Belongs to the peptidase C65 family.

The catalysed reaction is Thiol-dependent hydrolysis of ester, thioester, amide, peptide and isopeptide bonds formed by the C-terminal Gly of ubiquitin (a 76-residue protein attached to proteins as an intracellular targeting signal).. Cleavage activities for 'Lys-48'- and 'Lys-63'-linked ubiquitin (UB) tetramers is inhibited by UB aldehyde and N-ethylmaleimide but not by the metalloprotease inhibitors 1,10-phenanthroline and EDTA, and the serine protease inhibitor phenylmethylsulfonyl fluoride. Functionally, hydrolase that can remove conjugated ubiquitin from proteins in vitro and may therefore play an important regulatory role at the level of protein turnover by preventing degradation. Cysteine protease with a preference for Met-1 and 'Lys-48' over 'Lys-63'-linked ubiquitin (UB) tetramers (e.g. Ub2, Ub3 and Ub4) as substrates. This chain is OVARIAN TUMOR DOMAIN-containing deubiquitinating enzyme 1, found in Arabidopsis thaliana (Mouse-ear cress).